Reading from the N-terminus, the 948-residue chain is MGNNFSVESPSLAPFLCGKRKYLYNLERNLEALHKVMQDLNAMRNDLLKRLSKEEEIGLQGLQEVKEWISMVEEIEPKANRLLDESVSEIQRLSRYGYCSLIPASTYRYSEKVLTTMEGVETLRSKGVFEAVVHRALPPLVIKMPPIQLTVSQAKLLDTAWARLMDINVGTLGIYGRGGVGKTTLLTKLRNKLLVDAFGLVIFVVVGFEEVESIQDEIGKRLGLQWRRETKERKAAEILAVLKEKRFVLLLDGIQRELDLEEIGVPFPSRDNGCKIVFTTQSLEACDESKWVDAKVEITCLSPEEAWDLFQETVGENTLRSHQDIPKLARVVASTCRGLPLALNLIGEAMSGKRTVREWRYTIHVLASSTAEFPDMEDGTLPILKSIYDNMSDEIIRLCFLYCALFPENLDIGKEDLVNYWICEGILAKEDREEAEIQGYEIICDLVRMRLLMESGNGNCVKMHGMVREMALWIASEHFVVVGGERIHQMLNVNDWRMIRRMSVTSTQIQNISDSPQCSELTTLVFRRNRHLKWISGAFFQWMTGLVVLDLSFNRELAELPEEVSSLVLLRFLNLSWTCIKGLPLGLKELKSLIHLDLDYTSNLQEVDVIASLLNLQVLRLFHSVSMDLKLMEDIQLLKSLKELSLTVRGSSVLQRLLSIQRLASSIRRLHLTETTIVDGGILSLNAIFSLCELDILGCNILEITIDWRCTIQREIIPQFQNIRTMTIHRCEYLRDLTWLLLAPCLGELSVSECPQMEEVISKDKAMAKLGNTSEQPFQNLTKLVLDGLPKLESIYWTPLPFPVLEYLVIRRCPELRRLPFNSESTIGNQVETIIEEQVIKIVEWEDEATKQRFSHFNNRDFVQMAEDPKMDGLTSESHPIQTIDLVGTTGSGETATANNIQGKKVVQSGTHATVVTMECQTYKVFTPDCPINNMIDTPGTNFLLCYT.

Residues 20–57 (RKYLYNLERNLEALHKVMQDLNAMRNDLLKRLSKEEEI) are a coiled coil. The region spanning 134 to 432 (HRALPPLVIK…CEGILAKEDR (299 aa)) is the NB-ARC domain. ATP is bound at residue 176 to 183 (GRGGVGKT). LRR repeat units follow at residues 498–519 (MIRR…PQCS), 520–542 (ELTT…FFQW), 545–567 (GLVV…VSSL), 569–591 (LLRF…KELK), 592–614 (SLIH…ASLL), 615–636 (NLQV…EDIQ), 640–661 (SLKE…LSIQ), 666–686 (SIRR…LSLN), and 690–711 (SLCE…WRCT).

This sequence belongs to the disease resistance NB-LRR family.

In terms of biological role, potential disease resistance protein. The chain is Probable disease resistance protein At5g47260 from Arabidopsis thaliana (Mouse-ear cress).